A 449-amino-acid chain; its full sequence is Galactosyl transferase CpsE (449 aa).

Helical transmembrane passes span 5–22 (VVVY…TPNF), 27–46 (DLLF…DFYR), 59–78 (MVLK…FFIF), 88–107 (SFFT…NSFL), and 258–280 (FLDI…FLVP).

The protein belongs to the bacterial sugar transferase family.

The protein resides in the cell membrane. In terms of biological role, galactosyl transferase is essential for the assembly of the group B streptococci (GBS) type III capsular polysaccharide. May be involved in the formation of either or both galactosidic bonds by catalyzing the addition of galactose to an oligosaccharide precursor or to a lipid intermediate. Type III capsular polysaccharide consists of a linear backbone with short side chains ending in residues of N-acetylneuraminic acid or sialic acid. The presence of sialic acid on the surface of the organism inhibits activation of the alternative pathway of complement and is thought to be an important element in the virulence function of the capsule. This is Galactosyl transferase CpsE (cpsE) from Streptococcus agalactiae serotype III (strain NEM316).